Here is a 559-residue protein sequence, read N- to C-terminus: Alkaline phosphatase PhoK (559 aa).

Residues 1–19 (MLKHVAAALLLATAMPVVA) form the signal peptide. Zn(2+) is bound by residues aspartate 49 and threonine 89. The active-site Phosphothreonine intermediate is threonine 89. A disulfide bridge links cysteine 90 with cysteine 126. Substrate is bound by residues asparagine 110 and 171-173 (KDR). Cysteine 231 and cysteine 314 are joined by a disulfide. Residues aspartate 300, histidine 304, aspartate 345, histidine 346, and histidine 491 each contribute to the Zn(2+) site. A disulfide bridge connects residues cysteine 545 and cysteine 556.

In terms of assembly, monomer. Requires Zn(2+) as cofactor.

It is found in the secreted. The catalysed reaction is a phosphate monoester + H2O = an alcohol + phosphate. Functionally, alkaline phosphatase with broad substrate specificity. Precipitates uranium from alkaline solutions. This chain is Alkaline phosphatase PhoK, found in Sphingomonas sp.